The sequence spans 891 residues: Aconitate hydratase A (891 aa).

[4Fe-4S] cluster is bound by residues Cys-435, Cys-501, and Cys-504.

This sequence belongs to the aconitase/IPM isomerase family. As to quaternary structure, monomer. The cofactor is [4Fe-4S] cluster.

The enzyme catalyses citrate = D-threo-isocitrate. It carries out the reaction (2S,3R)-3-hydroxybutane-1,2,3-tricarboxylate = 2-methyl-cis-aconitate + H2O. It participates in carbohydrate metabolism; tricarboxylic acid cycle; isocitrate from oxaloacetate: step 2/2. The protein operates within organic acid metabolism; propanoate degradation. In terms of biological role, involved in the catabolism of short chain fatty acids (SCFA) via the tricarboxylic acid (TCA)(acetyl degradation route) and probably the 2-methylcitrate cycle I (propionate degradation route). Catalyzes the reversible isomerization of citrate to isocitrate via cis-aconitate. The apo form of AcnA functions as a RNA-binding regulatory protein. Could catalyze the hydration of 2-methyl-cis-aconitate to yield (2R,3S)-2-methylisocitrate. The sequence is that of Aconitate hydratase A (acn) from Legionella pneumophila subsp. pneumophila (strain Philadelphia 1 / ATCC 33152 / DSM 7513).